The primary structure comprises 278 residues: 4-diphosphocytidyl-2-C-methyl-D-erythritol kinase (278 aa).

Residue Lys-9 is part of the active site. Residue 89–99 (PVASGIGGGSA) participates in ATP binding. Residue Asp-128 is part of the active site.

It belongs to the GHMP kinase family. IspE subfamily.

The enzyme catalyses 4-CDP-2-C-methyl-D-erythritol + ATP = 4-CDP-2-C-methyl-D-erythritol 2-phosphate + ADP + H(+). Its pathway is isoprenoid biosynthesis; isopentenyl diphosphate biosynthesis via DXP pathway; isopentenyl diphosphate from 1-deoxy-D-xylulose 5-phosphate: step 3/6. Its function is as follows. Catalyzes the phosphorylation of the position 2 hydroxy group of 4-diphosphocytidyl-2C-methyl-D-erythritol. This Cereibacter sphaeroides (strain ATCC 17029 / ATH 2.4.9) (Rhodobacter sphaeroides) protein is 4-diphosphocytidyl-2-C-methyl-D-erythritol kinase.